The sequence spans 241 residues: Uridylate kinase (241 aa).

Residue lysine 12–glycine 15 coordinates ATP. Glycine 54 contributes to the UMP binding site. ATP-binding residues include glycine 55 and arginine 59. UMP is bound by residues aspartate 74 and valine 135–threonine 142. 3 residues coordinate ATP: threonine 162, tyrosine 168, and aspartate 171.

This sequence belongs to the UMP kinase family. Homohexamer.

It localises to the cytoplasm. It carries out the reaction UMP + ATP = UDP + ADP. The protein operates within pyrimidine metabolism; CTP biosynthesis via de novo pathway; UDP from UMP (UMPK route): step 1/1. Inhibited by UTP. In terms of biological role, catalyzes the reversible phosphorylation of UMP to UDP. This Sphingopyxis alaskensis (strain DSM 13593 / LMG 18877 / RB2256) (Sphingomonas alaskensis) protein is Uridylate kinase.